The chain runs to 487 residues: Reticulon-like protein B21 (487 aa).

Residues 1 to 22 (MTPRRSLSSSDSNDKSPSVSVV) show a composition bias toward low complexity. 3 disordered regions span residues 1 to 43 (MTPR…PGRV), 65 to 86 (LRKV…TEQE), and 113 to 149 (KSNE…EKKS). Residues 26-38 (ARSESVEGIEKKT) are compositionally biased toward basic and acidic residues. Acidic residues predominate over residues 118 to 143 (EQIDNGDQEIGDQDDYEEDGDEEEER). The 190-residue stretch at 230-419 (LVDLVMWRDV…FTLVWNLSSV (190 aa)) folds into the Reticulon domain. 4 helical membrane-spanning segments follow: residues 242–262 (STLV…ANDL), 264–284 (FSFI…MFVL), 354–374 (ITLW…PKIF), and 413–433 (VWNL…LVAF). Positions 446–463 (QADDDEDDNEEEEAEEEK) are enriched in acidic residues. A disordered region spans residues 446–487 (QADDDEDDNEEEEAEEEKEQVPPKHKRAPPHMMMPNKLKKIS).

The protein resides in the endoplasmic reticulum membrane. In Arabidopsis thaliana (Mouse-ear cress), this protein is Reticulon-like protein B21 (RTNLB21).